Reading from the N-terminus, the 117-residue chain is Large ribosomal subunit protein bL20 (117 aa).

The protein belongs to the bacterial ribosomal protein bL20 family.

Functionally, binds directly to 23S ribosomal RNA and is necessary for the in vitro assembly process of the 50S ribosomal subunit. It is not involved in the protein synthesizing functions of that subunit. The sequence is that of Large ribosomal subunit protein bL20 from Gloeothece citriformis (strain PCC 7424) (Cyanothece sp. (strain PCC 7424)).